A 33-amino-acid chain; its full sequence is MNLEILAQLTALAFIVVSGPLVIALLAFRKGNL.

Residues I5–L25 traverse the membrane as a helical segment.

It belongs to the Psb30/Ycf12 family. As to quaternary structure, PSII is composed of 1 copy each of membrane proteins PsbA, PsbB, PsbC, PsbD, PsbE, PsbF, PsbH, PsbI, PsbJ, PsbK, PsbL, PsbM, PsbT, PsbX, PsbY, PsbZ, Psb30/Ycf12, peripheral proteins of the oxygen-evolving complex and a large number of cofactors. It forms dimeric complexes.

The protein resides in the plastid. It localises to the chloroplast thylakoid membrane. In terms of biological role, a core subunit of photosystem II (PSII), probably helps stabilize the reaction center. This is Photosystem II reaction center protein Psb30 from Chaetosphaeridium globosum (Charophycean green alga).